An 87-amino-acid polypeptide reads, in one-letter code: uncharacterized protein (87 aa).

Residues 44–64 (DALYLAGSTIFTIVTTLVAWF) form a helical membrane-spanning segment.

It belongs to the SPP1 holin family.

The protein localises to the membrane. This is an uncharacterized protein from Bacillus licheniformis.